The following is a 746-amino-acid chain: SNF-related serine/threonine-protein kinase (746 aa).

The Protein kinase domain maps to 16–269; that stretch reads YDLDKTLGRG…LEEIESHPWL (254 aa). ATP is bound by residues 22 to 30 and Lys-45; that span reads LGRGHFAVV. The Proton acceptor role is filled by Asp-139. At Ser-162 the chain carries Phosphoserine. Thr-173 is subject to Phosphothreonine; by LKB1. The UBA domain maps to 291–334; that stretch reads SEEEHNSIIQRMVLGDIADRDAIVEALETNRYNHITATYFLLAE. Residues Ser-362, Ser-390, Ser-482, Ser-495, and Ser-518 each carry the phosphoserine modification. Residues 383–414 form a disordered region; sequence SHATVPQSPARAGDSVLNGHRSKGLCDPAKKD. Over residues 494-503 the composition is skewed to acidic residues; it reads ESDDEFDMDE. Residues 494–638 are disordered; sequence ESDDEFDMDE…SSSSSPASAA (145 aa). A compositionally biased stretch (basic residues) spans 522–532; that stretch reads VHKRYHRRKSQ. The segment covering 533–542 has biased composition (low complexity); it reads GRGSSCSSSE. Arg-534 is subject to Omega-N-methylarginine. Residues 549–558 are compositionally biased toward basic and acidic residues; sequence ESRRRLDKDS. 2 stretches are compositionally biased toward gly residues: residues 575 to 592 and 600 to 614; these read GSEG…GGGV and QGTG…GGTP. Low complexity predominate over residues 615-638; that stretch reads SGTAGSSRRCAGPDSSSSSPASAA.

The protein belongs to the protein kinase superfamily. CAMK Ser/Thr protein kinase family. Mg(2+) serves as cofactor. Post-translationally, autophosphorylated. Phosphorylation on Thr-173 by STK11/LKB1 in complex with STE20-related adapter-alpha (STRADA) pseudo kinase and CAB39. In terms of tissue distribution, ubiquitously expressed in all tissues examined with highest levels in the brain and testis. Strongly expressed in the pyramidal and granule neurons of the hippocampus and also in the cerebellum.

The protein localises to the nucleus. The enzyme catalyses L-seryl-[protein] + ATP = O-phospho-L-seryl-[protein] + ADP + H(+). It catalyses the reaction L-threonyl-[protein] + ATP = O-phospho-L-threonyl-[protein] + ADP + H(+). Activated by phosphorylation on Thr-173. In terms of biological role, may play a role in hematopoietic cell proliferation or differentiation. Potential mediator of neuronal apoptosis. The protein is SNF-related serine/threonine-protein kinase of Rattus norvegicus (Rat).